A 597-amino-acid chain; its full sequence is Elongation factor 4 (597 aa).

The tr-type G domain occupies 2–184 (KNIRNFSIIA…TMIAKIPPPV (183 aa)). GTP-binding positions include 14 to 19 (DHGKST) and 131 to 134 (NKID).

The protein belongs to the TRAFAC class translation factor GTPase superfamily. Classic translation factor GTPase family. LepA subfamily.

The protein localises to the cell inner membrane. The enzyme catalyses GTP + H2O = GDP + phosphate + H(+). In terms of biological role, required for accurate and efficient protein synthesis under certain stress conditions. May act as a fidelity factor of the translation reaction, by catalyzing a one-codon backward translocation of tRNAs on improperly translocated ribosomes. Back-translocation proceeds from a post-translocation (POST) complex to a pre-translocation (PRE) complex, thus giving elongation factor G a second chance to translocate the tRNAs correctly. Binds to ribosomes in a GTP-dependent manner. The polypeptide is Elongation factor 4 (Methylobacillus flagellatus (strain ATCC 51484 / DSM 6875 / VKM B-1610 / KT)).